We begin with the raw amino-acid sequence, 269 residues long: Putative hydro-lyase RL2444 (269 aa).

The protein belongs to the D-glutamate cyclase family.

This chain is Putative hydro-lyase RL2444, found in Rhizobium johnstonii (strain DSM 114642 / LMG 32736 / 3841) (Rhizobium leguminosarum bv. viciae).